The sequence spans 235 residues: Phosphoribosylaminoimidazole-succinocarboxamide synthase (235 aa).

Belongs to the SAICAR synthetase family.

It carries out the reaction 5-amino-1-(5-phospho-D-ribosyl)imidazole-4-carboxylate + L-aspartate + ATP = (2S)-2-[5-amino-1-(5-phospho-beta-D-ribosyl)imidazole-4-carboxamido]succinate + ADP + phosphate + 2 H(+). The protein operates within purine metabolism; IMP biosynthesis via de novo pathway; 5-amino-1-(5-phospho-D-ribosyl)imidazole-4-carboxamide from 5-amino-1-(5-phospho-D-ribosyl)imidazole-4-carboxylate: step 1/2. In Streptococcus thermophilus (strain ATCC BAA-491 / LMD-9), this protein is Phosphoribosylaminoimidazole-succinocarboxamide synthase.